The chain runs to 253 residues: Cyclin-C1-2 (253 aa).

The protein belongs to the cyclin family. Cyclin C subfamily.

This Arabidopsis thaliana (Mouse-ear cress) protein is Cyclin-C1-2 (CYCC1-2).